Here is a 98-residue protein sequence, read N- to C-terminus: N(2)-fixation sustaining protein CowN (98 aa).

Belongs to the CowN family.

Is required to sustain N(2)-dependent growth in the presence of low levels of carbon monoxide (CO). Probably acts by protecting the N(2) fixation ability of the nitrogenase complex, which is inactivated in the presence of CO. This is N(2)-fixation sustaining protein CowN from Paramagnetospirillum magneticum (strain ATCC 700264 / AMB-1) (Magnetospirillum magneticum).